We begin with the raw amino-acid sequence, 294 residues long: 4-hydroxy-tetrahydrodipicolinate synthase (294 aa).

Thr45 contacts pyruvate. Catalysis depends on Tyr133, which acts as the Proton donor/acceptor. Lys161 functions as the Schiff-base intermediate with substrate in the catalytic mechanism. Ile203 is a pyruvate binding site.

It belongs to the DapA family. As to quaternary structure, homotetramer; dimer of dimers.

The protein resides in the cytoplasm. The enzyme catalyses L-aspartate 4-semialdehyde + pyruvate = (2S,4S)-4-hydroxy-2,3,4,5-tetrahydrodipicolinate + H2O + H(+). It participates in amino-acid biosynthesis; L-lysine biosynthesis via DAP pathway; (S)-tetrahydrodipicolinate from L-aspartate: step 3/4. Functionally, catalyzes the condensation of (S)-aspartate-beta-semialdehyde [(S)-ASA] and pyruvate to 4-hydroxy-tetrahydrodipicolinate (HTPA). The chain is 4-hydroxy-tetrahydrodipicolinate synthase from Buchnera aphidicola subsp. Acyrthosiphon pisum (strain 5A).